Consider the following 133-residue polypeptide: Large ribosomal subunit protein bL20 (133 aa).

It belongs to the bacterial ribosomal protein bL20 family.

Binds directly to 23S ribosomal RNA and is necessary for the in vitro assembly process of the 50S ribosomal subunit. It is not involved in the protein synthesizing functions of that subunit. The protein is Large ribosomal subunit protein bL20 of Bartonella tribocorum (strain CIP 105476 / IBS 506).